A 100-amino-acid chain; its full sequence is NADH-quinone oxidoreductase subunit K (100 aa).

3 helical membrane passes run 4–24 (TSYYILLSALLFTLGVAGVLI), 29–49 (LVLFMSVELMLNSANLALVTF), and 60–80 (IVVFFVIVVAAAEVAVGLALL).

This sequence belongs to the complex I subunit 4L family. In terms of assembly, NDH-1 is composed of 14 different subunits. Subunits NuoA, H, J, K, L, M, N constitute the membrane sector of the complex.

Its subcellular location is the cell membrane. The enzyme catalyses a quinone + NADH + 5 H(+)(in) = a quinol + NAD(+) + 4 H(+)(out). In terms of biological role, NDH-1 shuttles electrons from NADH, via FMN and iron-sulfur (Fe-S) centers, to quinones in the respiratory chain. The immediate electron acceptor for the enzyme in this species is believed to be ubiquinone. Couples the redox reaction to proton translocation (for every two electrons transferred, four hydrogen ions are translocated across the cytoplasmic membrane), and thus conserves the redox energy in a proton gradient. This Roseiflexus sp. (strain RS-1) protein is NADH-quinone oxidoreductase subunit K.